The sequence spans 185 residues: Neuronal vesicle trafficking-associated protein 1 (185 aa).

Topologically, residues 1–82 (MVKLGNNFAE…ITEGVTERFK (82 aa)) are cytoplasmic. The helical; Signal-anchor for type II membrane protein transmembrane segment at 83 to 103 (VSVLVLFALAFLTCVVFLVVY) threads the bilayer. Residues 104 to 185 (KVYKYDRACP…QETEAAEKSA (82 aa)) are Lumenal-facing. The required for GRIP1 interaction stretch occupies residues 129 to 164 (ESYYTEQDSSAREKFYTVINHYNLAKQSITRSVSPW).

Belongs to the NSG family. In terms of assembly, forms a complex with GRIP1, GRIA2 and STX12; controls the intracellular fate of AMPAR and the endosomal sorting of the GRIA2 subunit toward recycling and membrane targeting. Interacts with GRIP1. Interacts with STX12. Interacts with APP; could regulate APP processing. Interacts with FAM171A1. Widely expressed in brain and spinal cord. Expressed in neurons during maturation and synapse formation.

The protein localises to the membrane. The protein resides in the golgi apparatus. It is found in the trans-Golgi network membrane. It localises to the endosome membrane. Its subcellular location is the cell projection. The protein localises to the dendrite. The protein resides in the early endosome membrane. It is found in the late endosome membrane. It localises to the lysosome lumen. Its subcellular location is the recycling endosome membrane. The protein localises to the cytoplasmic vesicle membrane. The protein resides in the golgi stack membrane. It is found in the endosome. It localises to the multivesicular body membrane. Its subcellular location is the endoplasmic reticulum membrane. Functionally, plays a role in the recycling mechanism in neurons of multiple receptors, including AMPAR, APP and L1CAM and acts at the level of early endosomes to promote sorting of receptors toward a recycling pathway. Regulates sorting and recycling of GRIA2 through interaction with GRIP1 and then contributes to the regulation of synaptic transmission and plasticity by affecting the recycling and targeting of AMPA receptors to the synapse. Is required for faithful sorting of L1CAM to axons by facilitating trafficking from somatodendritic early endosome or the recycling endosome. In an other hand, induces apoptosis via the activation of CASP3 in response to DNA damage. In Rattus norvegicus (Rat), this protein is Neuronal vesicle trafficking-associated protein 1.